The following is a 639-amino-acid chain: Phosphatidylinositol 3,4,5-trisphosphate 3-phosphatase cnrN (639 aa).

In terms of domain architecture, Phosphatase tensin-type spans 20–190 (FKSKEMDLDL…NYFKEIVSGS (171 aa)). Catalysis depends on Cys129, which acts as the Phosphocysteine intermediate. The C2 tensin-type domain maps to 195 to 350 (EFVLTFRSIE…LQMECRFQNN (156 aa)). Disordered regions lie at residues 243–265 (INNDNSESNNNNNNNNNNNNNNN), 395–429 (NNILASSAPTPLTTTTTTTTTTTTTSLPSSEHSTP), 451–498 (SSSG…SCSS), 519–567 (NNNN…RKRK), and 598–628 (FTKKINPNNNEENVDQKTLPILKKETNDPSE). Composition is skewed to low complexity over residues 244–265 (NNDNSESNNNNNNNNNNNNNNN), 395–424 (NNILASSAPTPLTTTTTTTTTTTTTSLPSS), 458–486 (NSSRNSNSNSRGGSSNSSSNRSSTSSRSS), and 519–554 (NNNNNNNNNNNNNNNNNNNNNKNSNNNNNESSSNSN). Residues 598–608 (FTKKINPNNNE) are compositionally biased toward polar residues. Residues 619–628 (LKKETNDPSE) show a composition bias toward basic and acidic residues.

The cofactor is Mg(2+).

It catalyses the reaction a 1,2-diacyl-sn-glycero-3-phospho-(1D-myo-inositol-3,4,5-trisphosphate) + H2O = a 1,2-diacyl-sn-glycero-3-phospho-(1D-myo-inositol-4,5-bisphosphate) + phosphate. Functionally, protein phosphatase that negatively regulates PI3K-dependent pathways. Regulates cAMP signal transduction to control territory size. During development, a lawn of Dictyostelium cells breaks up into territories where cells aggregate in dendritic streams to form groups of 20'000 cells. The polypeptide is Phosphatidylinositol 3,4,5-trisphosphate 3-phosphatase cnrN (cnrN) (Dictyostelium discoideum (Social amoeba)).